The chain runs to 267 residues: Tryptophan synthase alpha chain (267 aa).

Active-site proton acceptor residues include glutamate 49 and aspartate 60.

The protein belongs to the TrpA family. Tetramer of two alpha and two beta chains.

The catalysed reaction is (1S,2R)-1-C-(indol-3-yl)glycerol 3-phosphate + L-serine = D-glyceraldehyde 3-phosphate + L-tryptophan + H2O. Its pathway is amino-acid biosynthesis; L-tryptophan biosynthesis; L-tryptophan from chorismate: step 5/5. Functionally, the alpha subunit is responsible for the aldol cleavage of indoleglycerol phosphate to indole and glyceraldehyde 3-phosphate. The sequence is that of Tryptophan synthase alpha chain from Salinispora arenicola (strain CNS-205).